The chain runs to 360 residues: Phospho-N-acetylmuramoyl-pentapeptide-transferase (360 aa).

10 helical membrane passes run 27–47 (IVSL…MIAW), 73–93 (TMGG…WANL), 94–114 (SNPY…VGFV), 132–152 (WKYF…YSIG), 168–188 (VMPQ…VGTS), 199–219 (GLAI…AWAT), 236–256 (ASEL…FLWF), 263–283 (VFMG…IAVL), 288–308 (FLLV…ILQV), and 338–358 (VIVR…ATLK).

The protein belongs to the glycosyltransferase 4 family. MraY subfamily. Requires Mg(2+) as cofactor.

The protein resides in the cell inner membrane. The catalysed reaction is UDP-N-acetyl-alpha-D-muramoyl-L-alanyl-gamma-D-glutamyl-meso-2,6-diaminopimeloyl-D-alanyl-D-alanine + di-trans,octa-cis-undecaprenyl phosphate = di-trans,octa-cis-undecaprenyl diphospho-N-acetyl-alpha-D-muramoyl-L-alanyl-D-glutamyl-meso-2,6-diaminopimeloyl-D-alanyl-D-alanine + UMP. Its pathway is cell wall biogenesis; peptidoglycan biosynthesis. In terms of biological role, catalyzes the initial step of the lipid cycle reactions in the biosynthesis of the cell wall peptidoglycan: transfers peptidoglycan precursor phospho-MurNAc-pentapeptide from UDP-MurNAc-pentapeptide onto the lipid carrier undecaprenyl phosphate, yielding undecaprenyl-pyrophosphoryl-MurNAc-pentapeptide, known as lipid I. The protein is Phospho-N-acetylmuramoyl-pentapeptide-transferase of Pectobacterium atrosepticum (strain SCRI 1043 / ATCC BAA-672) (Erwinia carotovora subsp. atroseptica).